Consider the following 249-residue polypeptide: Probable transcriptional regulatory protein HY04AAS1_0501 (249 aa).

This sequence belongs to the TACO1 family.

The protein localises to the cytoplasm. This chain is Probable transcriptional regulatory protein HY04AAS1_0501, found in Hydrogenobaculum sp. (strain Y04AAS1).